The primary structure comprises 134 residues: Small ribosomal subunit protein uS11 (134 aa).

The disordered stretch occupies residues 114–134 (TPVPHNGTRPPRKWFKRQEKR). The segment covering 123 to 134 (PPRKWFKRQEKR) has biased composition (basic residues).

Belongs to the universal ribosomal protein uS11 family. As to quaternary structure, part of the 30S ribosomal subunit. Interacts with proteins S7 and S18. Binds to IF-3.

In terms of biological role, located on the platform of the 30S subunit, it bridges several disparate RNA helices of the 16S rRNA. Forms part of the Shine-Dalgarno cleft in the 70S ribosome. The sequence is that of Small ribosomal subunit protein uS11 from Mesomycoplasma hyopneumoniae (strain 232) (Mycoplasma hyopneumoniae).